We begin with the raw amino-acid sequence, 259 residues long: Type III pantothenate kinase (259 aa).

6–13 (DVGNTNCT) contributes to the ATP binding site. A substrate-binding site is contributed by 107–110 (GSDR). The Proton acceptor role is filled by D109. D129 is a K(+) binding site. T132 provides a ligand contact to ATP. T184 provides a ligand contact to substrate.

Belongs to the type III pantothenate kinase family. Homodimer. Requires NH4(+) as cofactor. K(+) serves as cofactor.

The protein resides in the cytoplasm. The catalysed reaction is (R)-pantothenate + ATP = (R)-4'-phosphopantothenate + ADP + H(+). The protein operates within cofactor biosynthesis; coenzyme A biosynthesis; CoA from (R)-pantothenate: step 1/5. Functionally, catalyzes the phosphorylation of pantothenate (Pan), the first step in CoA biosynthesis. In Listeria monocytogenes serotype 4b (strain CLIP80459), this protein is Type III pantothenate kinase.